A 225-amino-acid chain; its full sequence is Putative adhesin RT0816 (225 aa).

A signal peptide spans 1-22; the sequence is MKKLLLIAATSATILSSSISFA.

This chain is Putative adhesin RT0816, found in Rickettsia typhi (strain ATCC VR-144 / Wilmington).